Consider the following 189-residue polypeptide: Chitin synthase 1 (189 aa).

This sequence belongs to the chitin synthase family. Class I subfamily.

It is found in the cell membrane. It carries out the reaction [(1-&gt;4)-N-acetyl-beta-D-glucosaminyl](n) + UDP-N-acetyl-alpha-D-glucosamine = [(1-&gt;4)-N-acetyl-beta-D-glucosaminyl](n+1) + UDP + H(+). Its function is as follows. Polymerizes chitin, a structural polymer of the cell wall and septum, by transferring the sugar moiety of UDP-GlcNAc to the non-reducing end of the growing chitin polymer. The polypeptide is Chitin synthase 1 (CHS1) (Rhinocladiella atrovirens).